A 139-amino-acid chain; its full sequence is Acidic phospholipase A2 DE-I (139 aa).

Positions 1-16 (MRTLWIMAVLLLGVEG) are cleaved as a signal peptide. Intrachain disulfides connect Cys-42-Cys-132, Cys-44-Cys-60, Cys-59-Cys-111, Cys-65-Cys-139, Cys-66-Cys-104, Cys-73-Cys-97, and Cys-91-Cys-102. Residues Tyr-43, Gly-45, and Gly-47 each coordinate Ca(2+). The active site involves His-63. Asp-64 is a binding site for Ca(2+). Asp-105 is an active-site residue.

The cofactor is Ca(2+). In terms of tissue distribution, expressed by the venom gland.

The protein localises to the secreted. It catalyses the reaction a 1,2-diacyl-sn-glycero-3-phosphocholine + H2O = a 1-acyl-sn-glycero-3-phosphocholine + a fatty acid + H(+). Its function is as follows. Snake venom phospholipase A2 (PLA2) that inhibits the ADP- and collagen-induced human platelet aggregation. Exhibits high hydrolytic activities and preferred the anionic micelles to the zwitterionic micelles. PLA2 catalyzes the calcium-dependent hydrolysis of the 2-acyl groups in 3-sn-phosphoglycerides. This is Acidic phospholipase A2 DE-I from Ovophis okinavensis (Ryukyu Island pit viper).